The following is a 293-amino-acid chain: Fructose-bisphosphate aldolase (293 aa).

Residue serine 50 participates in D-glyceraldehyde 3-phosphate binding. Aspartate 85 serves as the catalytic Proton donor. The Zn(2+) site is built by histidine 86, aspartate 106, glutamate 136, and histidine 178. A dihydroxyacetone phosphate-binding site is contributed by glycine 179. Histidine 208 serves as a coordination point for Zn(2+). Dihydroxyacetone phosphate-binding positions include 209–211 and 230–233; these read GGS and NVNT.

The protein belongs to the class II fructose-bisphosphate aldolase family. Zn(2+) is required as a cofactor.

The enzyme catalyses beta-D-fructose 1,6-bisphosphate = D-glyceraldehyde 3-phosphate + dihydroxyacetone phosphate. The protein operates within carbohydrate degradation; glycolysis; D-glyceraldehyde 3-phosphate and glycerone phosphate from D-glucose: step 4/4. Catalyzes the aldol condensation of dihydroxyacetone phosphate (DHAP or glycerone-phosphate) with glyceraldehyde 3-phosphate (G3P) to form fructose 1,6-bisphosphate (FBP) in gluconeogenesis and the reverse reaction in glycolysis. This is Fructose-bisphosphate aldolase (fba) from Streptococcus pneumoniae serotype 4 (strain ATCC BAA-334 / TIGR4).